The primary structure comprises 861 residues: Probable beta-glucosidase A (861 aa).

The first 19 residues, 1 to 19, serve as a signal peptide directing secretion; the sequence is MKLGWIEVAALAAASVVSA. Residues Asn62, Asn212, and Asn253 are each glycosylated (N-linked (GlcNAc...) asparagine). Residue Asp281 is part of the active site. N-linked (GlcNAc...) asparagine glycosylation is found at Asn316, Asn323, Asn355, Asn443, Asn524, Asn543, Asn565, Asn669, and Asn713. The segment at 730 to 754 is disordered; sequence DSKYIPEGATDGSAQPRLPASGGAG. N-linked (GlcNAc...) asparagine glycosylation is present at Asn846.

It belongs to the glycosyl hydrolase 3 family.

It localises to the secreted. The catalysed reaction is Hydrolysis of terminal, non-reducing beta-D-glucosyl residues with release of beta-D-glucose.. It participates in glycan metabolism; cellulose degradation. In terms of biological role, beta-glucosidases are one of a number of cellulolytic enzymes involved in the degradation of cellulosic biomass. Catalyzes the last step releasing glucose from the inhibitory cellobiose. The protein is Probable beta-glucosidase A (bglA) of Aspergillus oryzae (strain ATCC 42149 / RIB 40) (Yellow koji mold).